A 321-amino-acid polypeptide reads, in one-letter code: Protein BIG GRAIN 1-like E (321 aa).

Residues 134 to 217 (AGSKKNKSKS…PPPYLNTPTK (84 aa)) are disordered. Residues 135-147 (GSKKNKSKSKSKT) show a composition bias toward basic residues. A compositionally biased stretch (low complexity) spans 172–206 (ISHFFSSSRSTSTTTTTTASSSSKSLISSSSSGFR).

It belongs to the BIG GRAIN 1 (BG1) plant protein family.

The protein localises to the cell membrane. Functionally, involved in auxin transport. Regulator of the auxin signaling pathway. This is Protein BIG GRAIN 1-like E from Arabidopsis thaliana (Mouse-ear cress).